An 825-amino-acid chain; its full sequence is Putative pentatricopeptide repeat-containing protein At2g01510 (825 aa).

PPR repeat units lie at residues 47–77 (DTCR…MPHK), 78–108 (NTVS…MPDR), 109–143 (TVVT…SSCT), 146–180 (DHVT…GFDT), 183–213 (FLTV…IPEK), 214–248 (DSVT…GHQP), 249–283 (SDFT…GFSR), 284–314 (DASV…MPEL), 315–349 (DFVS…GFDR), 350–384 (RNFP…TADS), 385–415 (ILHV…LPQR), 416–450 (TTVS…NLRA), 451–485 (DQST…GNLE), 486–516 (NVFS…MPDR), 517–551 (NAVS…GLQP), 552–587 (DSVS…GITP), and 588–618 (KKKH…MPFE). A type E motif region spans residues 623–699 (MWSSVLNACR…VPAYSWVEVN (77 aa)). A type E(+) motif region spans residues 700–730 (HKIHVFSSNDQTHPNGDEIVRKINELTAEIE). The tract at residues 731–825 (REGYKPDTSS…EGVCSCGDYW (95 aa)) is type DYW motif.

Belongs to the PPR family. PCMP-H subfamily.

The chain is Putative pentatricopeptide repeat-containing protein At2g01510 (PCMP-H36) from Arabidopsis thaliana (Mouse-ear cress).